A 205-amino-acid polypeptide reads, in one-letter code: Golgi to ER traffic protein 1 (205 aa).

Topologically, residues 1 to 3 are lumenal; sequence MDY. The helical transmembrane segment at 4–24 threads the bilayer; that stretch reads WILLVLAFLVADKSWHLTGLL. Residues 25–96 lie on the Cytoplasmic side of the membrane; that stretch reads ATKLTSPERL…ATKARLAKLK (72 aa). A coiled-coil region spans residues 32-96; the sequence is ERLQQLIRER…ATKARLAKLK (65 aa). A helical transmembrane segment spans residues 97–117; the sequence is LLVVTVPFTALKFYKGKLPVY. Topologically, residues 118-156 are lumenal; that stretch reads ALPKGMFPRFIEGTLEHGWLYMALAPLNMKQFSEGASVA. A helical membrane pass occupies residues 157–173; sequence VSLGIWLFALLRVLGAI. Over 174–205 the chain is Cytoplasmic; sequence EFVLETLREQNPQVATETAKVHARTAQAASAN.

The protein belongs to the WRB/GET1 family. As to quaternary structure, component of the Golgi to ER traffic (GET) complex, which is composed of GET1, GET2 and GET3. Within the complex, GET1 and GET2 form a heterotetramer which is stabilized by phosphatidylinositol binding and which binds to the GET3 homodimer.

The protein resides in the endoplasmic reticulum membrane. The protein localises to the golgi apparatus membrane. In terms of biological role, required for the post-translational delivery of tail-anchored (TA) proteins to the endoplasmic reticulum. Together with GET2, acts as a membrane receptor for soluble GET3, which recognizes and selectively binds the transmembrane domain of TA proteins in the cytosol. The GET complex cooperates with the HDEL receptor ERD2 to mediate the ATP-dependent retrieval of resident ER proteins that contain a C-terminal H-D-E-L retention signal from the Golgi to the ER. This Eremothecium gossypii (strain ATCC 10895 / CBS 109.51 / FGSC 9923 / NRRL Y-1056) (Yeast) protein is Golgi to ER traffic protein 1.